The chain runs to 912 residues: Protein translocase subunit SecA (912 aa).

ATP-binding positions include Q86, 104–108 (GEGKT), and D494. A disordered region spans residues 860-912 (EAPEKPAQLQYTAPGEDGASQTRVEGRSSGRSGNPAKAAQDGARKPAPKKKKR).

The protein belongs to the SecA family. Monomer and homodimer. Part of the essential Sec protein translocation apparatus which comprises SecA, SecYEG and auxiliary proteins SecDF. Other proteins may also be involved.

It is found in the cell membrane. The protein localises to the cytoplasm. The enzyme catalyses ATP + H2O + cellular proteinSide 1 = ADP + phosphate + cellular proteinSide 2.. In terms of biological role, part of the Sec protein translocase complex. Interacts with the SecYEG preprotein conducting channel. Has a central role in coupling the hydrolysis of ATP to the transfer of proteins into and across the cell membrane, serving as an ATP-driven molecular motor driving the stepwise translocation of polypeptide chains across the membrane. The sequence is that of Protein translocase subunit SecA from Arthrobacter sp. (strain FB24).